Reading from the N-terminus, the 142-residue chain is Peptide methionine sulfoxide reductase MsrB (142 aa).

One can recognise a MsrB domain in the interval 2-125 (IKKNKEELND…NSAAIQFIPY (124 aa)). The active-site Nucleophile is C114.

Belongs to the MsrB Met sulfoxide reductase family.

The enzyme catalyses L-methionyl-[protein] + [thioredoxin]-disulfide + H2O = L-methionyl-(R)-S-oxide-[protein] + [thioredoxin]-dithiol. This Staphylococcus epidermidis (strain ATCC 35984 / DSM 28319 / BCRC 17069 / CCUG 31568 / BM 3577 / RP62A) protein is Peptide methionine sulfoxide reductase MsrB.